The chain runs to 407 residues: ATP phosphoribosyltransferase regulatory subunit (407 aa).

It belongs to the class-II aminoacyl-tRNA synthetase family. HisZ subfamily. Heteromultimer composed of HisG and HisZ subunits.

The protein localises to the cytoplasm. It functions in the pathway amino-acid biosynthesis; L-histidine biosynthesis; L-histidine from 5-phospho-alpha-D-ribose 1-diphosphate: step 1/9. Required for the first step of histidine biosynthesis. May allow the feedback regulation of ATP phosphoribosyltransferase activity by histidine. The polypeptide is ATP phosphoribosyltransferase regulatory subunit (Rippkaea orientalis (strain PCC 8801 / RF-1) (Cyanothece sp. (strain PCC 8801))).